Here is a 260-residue protein sequence, read N- to C-terminus: Circadian clock-controlled protein daywake (260 aa).

The signal sequence occupies residues 1–25 (MQLTGASMFLVWVGLLSWVSCRVDA).

This sequence belongs to the TO family. Epidermis of newly eclosed adults.

Its function is as follows. Component of the circadian clock or downstream effector of clock function. Required for suppressing daytime sleep (siesta) under ambient environmental temperatures. Part of a heat avoidance mechanism that modulates daytime sleep behavior under different environmental temperatures to minimize the risk of heat exposure. Under cooler ambient temperatures, suppresses daytime sleep (siesta) and thus allows for longer periods of daytime activity. The protein is Circadian clock-controlled protein daywake of Drosophila melanogaster (Fruit fly).